The primary structure comprises 54 residues: Large ribosomal subunit protein eL37 (54 aa).

4 residues coordinate Zn(2+): cysteine 20, cysteine 23, cysteine 35, and cysteine 38. The C4-type zinc-finger motif lies at 20–38 (CRRCGHHTYNVRTKRCSHC).

The protein belongs to the eukaryotic ribosomal protein eL37 family. Zn(2+) serves as cofactor.

In terms of biological role, binds to the 23S rRNA. This is Large ribosomal subunit protein eL37 (rpl37e) from Thermoplasma acidophilum (strain ATCC 25905 / DSM 1728 / JCM 9062 / NBRC 15155 / AMRC-C165).